Consider the following 169-residue polypeptide: ATP synthase subunit b (169 aa).

A helical transmembrane segment spans residues 26-46 (FFFVLLIFLIVLGVIAKWVVP).

It belongs to the ATPase B chain family. As to quaternary structure, F-type ATPases have 2 components, F(1) - the catalytic core - and F(0) - the membrane proton channel. F(1) has five subunits: alpha(3), beta(3), gamma(1), delta(1), epsilon(1). F(0) has three main subunits: a(1), b(2) and c(10-14). The alpha and beta chains form an alternating ring which encloses part of the gamma chain. F(1) is attached to F(0) by a central stalk formed by the gamma and epsilon chains, while a peripheral stalk is formed by the delta and b chains.

It localises to the cell membrane. In terms of biological role, f(1)F(0) ATP synthase produces ATP from ADP in the presence of a proton or sodium gradient. F-type ATPases consist of two structural domains, F(1) containing the extramembraneous catalytic core and F(0) containing the membrane proton channel, linked together by a central stalk and a peripheral stalk. During catalysis, ATP synthesis in the catalytic domain of F(1) is coupled via a rotary mechanism of the central stalk subunits to proton translocation. Functionally, component of the F(0) channel, it forms part of the peripheral stalk, linking F(1) to F(0). The sequence is that of ATP synthase subunit b from Mycobacterium sp. (strain JLS).